The sequence spans 232 residues: Ribonuclease P protein component 3 (232 aa).

The protein belongs to the eukaryotic/archaeal RNase P protein component 3 family. As to quaternary structure, consists of a catalytic RNA component and at least 4-5 protein subunits.

It localises to the cytoplasm. It catalyses the reaction Endonucleolytic cleavage of RNA, removing 5'-extranucleotides from tRNA precursor.. In terms of biological role, part of ribonuclease P, a protein complex that generates mature tRNA molecules by cleaving their 5'-ends. In Methanococcus maripaludis (strain C7 / ATCC BAA-1331), this protein is Ribonuclease P protein component 3.